A 202-amino-acid polypeptide reads, in one-letter code: Small ribosomal subunit protein uS5 (202 aa).

Gly residues predominate over residues 1–13; the sequence is MPGQQRRGGGSGG. Residues 1–31 are disordered; sequence MPGQQRRGGGSGGSDRRERRDRSGGGPAQEK. Positions 14 to 23 are enriched in basic and acidic residues; the sequence is SDRRERRDRS. The S5 DRBM domain maps to 34-97; the sequence is YVERVVAINR…EEAKKHFFKV (64 aa).

Belongs to the universal ribosomal protein uS5 family. As to quaternary structure, part of the 30S ribosomal subunit. Contacts proteins S4 and S8.

Functionally, with S4 and S12 plays an important role in translational accuracy. Its function is as follows. Located at the back of the 30S subunit body where it stabilizes the conformation of the head with respect to the body. The protein is Small ribosomal subunit protein uS5 of Frankia alni (strain DSM 45986 / CECT 9034 / ACN14a).